The primary structure comprises 254 residues: 3-deoxy-manno-octulosonate cytidylyltransferase (254 aa).

This sequence belongs to the KdsB family.

The protein localises to the cytoplasm. The catalysed reaction is 3-deoxy-alpha-D-manno-oct-2-ulosonate + CTP = CMP-3-deoxy-beta-D-manno-octulosonate + diphosphate. The protein operates within nucleotide-sugar biosynthesis; CMP-3-deoxy-D-manno-octulosonate biosynthesis; CMP-3-deoxy-D-manno-octulosonate from 3-deoxy-D-manno-octulosonate and CTP: step 1/1. It participates in bacterial outer membrane biogenesis; lipopolysaccharide biosynthesis. In terms of biological role, activates KDO (a required 8-carbon sugar) for incorporation into bacterial lipopolysaccharide in Gram-negative bacteria. In Pseudomonas aeruginosa (strain UCBPP-PA14), this protein is 3-deoxy-manno-octulosonate cytidylyltransferase.